A 208-amino-acid chain; its full sequence is Heavy metal-associated isoprenylated plant protein 42 (208 aa).

The region spanning 6–70 (FPICILKMNL…AVAKLGQSPQ (65 aa)) is the HMA domain. The interval 93–116 (ATNKTQDKPSPPAPPVTATTPVET) is disordered. A Cysteine methyl ester modification is found at Cys205. Cys205 carries S-farnesyl cysteine lipidation. A propeptide spans 206–208 (SIM) (removed in mature form).

It belongs to the HIPP family.

Its function is as follows. Probable heavy-metal-binding protein. This Arabidopsis thaliana (Mouse-ear cress) protein is Heavy metal-associated isoprenylated plant protein 42.